Reading from the N-terminus, the 630-residue chain is MKMAAVGSAKSTGPGQRSKSRPGALSAPLSLEEARCPVCSEILLEPVTMPCGHSVCLHCFQRTVKLISLCCPLCRLRVSSWARKQSREKSLVNAELWELVRLSHPERCKRRMEQRDGEIPDGEIFRAPVPVHKVGEMRQEYEKQKMKSGRSEETDERKKKMHIKEECVLLKHCQYPFCGVSDSENEEPVGRRTRHVSAFVRKTRCSPAFNKSCLHSSAAQRSRSCTDSEDGRGKSRGHTNQAVPEKANIAHSYNAGILLSSENSRSFSAPLLSLDKRHHWRGIHTSSATLVLQTKPERSISPESNDSISEELNHFKPIVCSPCTPPKRLPDGRLLEPMIVKSTPRNLTRALHKSTSYEASPTILQKWKQIEVDRQCIKVTSKGTVTSPIAEDLNLKLSPVEERDCQPCSCSVAKDRLLDLQCICGSNAHKSKSRKDKPIIYNKRRLIFDPYNKGEEKTQVAALIKTFGDSSTPKACKELCEPSEMGPPMLDSNAGHCNQGTVDPDHNIKINEPTTMSCVLNRPTSRRGKKRSQKTKHMEETLQTKISRTNRYDSLDDLIVQRMSQEKEDRELALKLQRQFDRECKKVDRHKTSRNKYELRSWGSKDGIVGYNTRRSGRVSKQNEHFNYTC.

Residues 1–24 (MKMAAVGSAKSTGPGQRSKSRPGA) are disordered. The RING-type zinc finger occupies 36–75 (CPVCSEILLEPVTMPCGHSVCLHCFQRTVKLISLCCPLCR). Residues 155–163 (DERKKKMHI) carry the UMI motif motif. A disordered region spans residues 220 to 247 (QRSRSCTDSEDGRGKSRGHTNQAVPEKA). The span at 224–233 (SCTDSEDGRG) shows a compositional bias: basic and acidic residues. An MIU motif motif is present at residues 565–582 (QEKEDRELALKLQRQFDR). The short motif at 599–611 (LRSWGSKDGIVGY) is the LR motif element.

This sequence belongs to the RNF169 family.

The protein resides in the nucleus. It localises to the nucleoplasm. The enzyme catalyses S-ubiquitinyl-[E2 ubiquitin-conjugating enzyme]-L-cysteine + [acceptor protein]-L-lysine = [E2 ubiquitin-conjugating enzyme]-L-cysteine + N(6)-ubiquitinyl-[acceptor protein]-L-lysine.. It functions in the pathway protein modification; protein ubiquitination. Probable E3 ubiquitin-protein ligase that acts as a negative regulator of double-strand breaks (DSBs) repair following DNA damage. This is E3 ubiquitin-protein ligase RNF169 (rnf169) from Danio rerio (Zebrafish).